The sequence spans 251 residues: Small ribosomal subunit protein uS3 (251 aa).

In terms of domain architecture, KH type-2 spans 39–111; that stretch reads IRELINNFSK…DVDLNILEVK (73 aa).

The protein belongs to the universal ribosomal protein uS3 family. In terms of assembly, part of the 30S ribosomal subunit. Forms a tight complex with proteins S10 and S14.

Functionally, binds the lower part of the 30S subunit head. Binds mRNA in the 70S ribosome, positioning it for translation. In Phytoplasma sp. (strain STRAWB1), this protein is Small ribosomal subunit protein uS3.